The chain runs to 509 residues: CDK5RAP3 protein homolog (509 aa).

This sequence belongs to the CDK5RAP3 family.

It localises to the nucleus. It is found in the cytoplasm. Its function is as follows. Substrate adapter of E3 ligase complexes mediating ufmylation, the covalent attachment of the ubiquitin-like modifier UFM1 to substrate proteins, and which is involved in various processes, such as ribosome recycling and reticulophagy (also called ER-phagy). In Drosophila melanogaster (Fruit fly), this protein is CDK5RAP3 protein homolog.